A 236-amino-acid polypeptide reads, in one-letter code: ATP synthase subunit a (236 aa).

5 consecutive transmembrane segments (helical) span residues 17-37 (WTNL…LFGL), 76-96 (SFFV…GLII), 113-133 (PVVT…AGVA), 170-190 (IFGN…MAFS), and 196-216 (MIVS…IGAI).

The protein belongs to the ATPase A chain family. In terms of assembly, F-type ATPases have 2 components, CF(1) - the catalytic core - and CF(0) - the membrane proton channel. CF(1) has five subunits: alpha(3), beta(3), gamma(1), delta(1), epsilon(1). CF(0) has three main subunits: a(1), b(2) and c(9-12). The alpha and beta chains form an alternating ring which encloses part of the gamma chain. CF(1) is attached to CF(0) by a central stalk formed by the gamma and epsilon chains, while a peripheral stalk is formed by the delta and b chains.

The protein resides in the cell membrane. Key component of the proton channel; it plays a direct role in the translocation of protons across the membrane. The protein is ATP synthase subunit a of Limosilactobacillus fermentum (strain NBRC 3956 / LMG 18251) (Lactobacillus fermentum).